We begin with the raw amino-acid sequence, 448 residues long: Asparagine--tRNA ligase (448 aa).

Belongs to the class-II aminoacyl-tRNA synthetase family. Homodimer.

It is found in the cytoplasm. It carries out the reaction tRNA(Asn) + L-asparagine + ATP = L-asparaginyl-tRNA(Asn) + AMP + diphosphate + H(+). The chain is Asparagine--tRNA ligase from Streptococcus pyogenes serotype M12 (strain MGAS9429).